Reading from the N-terminus, the 89-residue chain is Small ribosomal subunit protein uS15 (89 aa).

Belongs to the universal ribosomal protein uS15 family. As to quaternary structure, part of the 30S ribosomal subunit. Forms a bridge to the 50S subunit in the 70S ribosome, contacting the 23S rRNA.

In terms of biological role, one of the primary rRNA binding proteins, it binds directly to 16S rRNA where it helps nucleate assembly of the platform of the 30S subunit by binding and bridging several RNA helices of the 16S rRNA. Its function is as follows. Forms an intersubunit bridge (bridge B4) with the 23S rRNA of the 50S subunit in the ribosome. The polypeptide is Small ribosomal subunit protein uS15 (Rhizobium leguminosarum bv. trifolii (strain WSM2304)).